A 147-amino-acid chain; its full sequence is D-aminoacyl-tRNA deacylase (147 aa).

Positions 136–137 (GP) match the Gly-cisPro motif, important for rejection of L-amino acids motif.

It belongs to the DTD family. Homodimer.

It is found in the cytoplasm. It catalyses the reaction glycyl-tRNA(Ala) + H2O = tRNA(Ala) + glycine + H(+). The enzyme catalyses a D-aminoacyl-tRNA + H2O = a tRNA + a D-alpha-amino acid + H(+). Functionally, an aminoacyl-tRNA editing enzyme that deacylates mischarged D-aminoacyl-tRNAs. Also deacylates mischarged glycyl-tRNA(Ala), protecting cells against glycine mischarging by AlaRS. Acts via tRNA-based rather than protein-based catalysis; rejects L-amino acids rather than detecting D-amino acids in the active site. By recycling D-aminoacyl-tRNA to D-amino acids and free tRNA molecules, this enzyme counteracts the toxicity associated with the formation of D-aminoacyl-tRNA entities in vivo and helps enforce protein L-homochirality. The protein is D-aminoacyl-tRNA deacylase of Nitratiruptor sp. (strain SB155-2).